Reading from the N-terminus, the 788-residue chain is Protein FAR1-RELATED SEQUENCE 5 (788 aa).

Residues 87–179 form the FAR1 domain; sequence AFYNSYARRI…VKDHNHELVP (93 aa). The MULE domain maps to 299 to 395; it reads TVTFDTTYRS…CKWHILKKCQ (97 aa). The segment at 584–616 adopts an SWIM-type zinc-finger fold; the sequence is FNVLEMRANCSCQMFEFSGIICRHILAVFRVTN. The disordered stretch occupies residues 713 to 733; the sequence is SSVTGGKHQQEVLAQPEPEDE. Residues 731-768 are a coiled coil; it reads EDEMDKKINQLRNELELANRKCEAYRTNLLSVLKEMED.

It belongs to the FHY3/FAR1 family. Expressed in hypocotyls, rosette and cauline leaves, inflorescences stems, flowers and siliques.

The protein localises to the nucleus. In terms of biological role, putative transcription activator involved in regulating light control of development. In Arabidopsis thaliana (Mouse-ear cress), this protein is Protein FAR1-RELATED SEQUENCE 5 (FRS5).